We begin with the raw amino-acid sequence, 243 residues long: GTP cyclohydrolase 1 (243 aa).

A Phosphothreonine modification is found at Thr-15. Positions 18–55 (NIRPTSPYTLNPPVERDGFSWPSVGTRQRAEETEEEEK) are disordered. Ser-23 is subject to Phosphoserine. Cys-132, His-135, and Cys-203 together coordinate Zn(2+).

It belongs to the GTP cyclohydrolase I family. In terms of assembly, homodimer.

It catalyses the reaction GTP + H2O = 7,8-dihydroneopterin 3'-triphosphate + formate + H(+). It participates in cofactor biosynthesis; 7,8-dihydroneopterin triphosphate biosynthesis; 7,8-dihydroneopterin triphosphate from GTP: step 1/1. Its function is as follows. GTP cyclohydrolase 1 is the first enzyme in the biosynthetic pathway leading to folic acid. This chain is GTP cyclohydrolase 1, found in Saccharomyces cerevisiae (strain ATCC 204508 / S288c) (Baker's yeast).